The following is a 329-amino-acid chain: ADP-L-glycero-D-manno-heptose-6-epimerase (329 aa).

Residues 10–11 (FI), 31–32 (DD), lysine 38, lysine 53, 74–78 (QGACS), and asparagine 91 contribute to the NADP(+) site. The active-site Proton acceptor is the tyrosine 138. Lysine 142 provides a ligand contact to NADP(+). Residue asparagine 167 coordinates substrate. Positions 168 and 176 each coordinate NADP(+). Lysine 176 functions as the Proton acceptor in the catalytic mechanism. Substrate contacts are provided by residues arginine 178, histidine 185, 199–202 (FAGW), arginine 212, and tyrosine 291.

It belongs to the NAD(P)-dependent epimerase/dehydratase family. HldD subfamily. Homopentamer. The cofactor is NADP(+).

The enzyme catalyses ADP-D-glycero-beta-D-manno-heptose = ADP-L-glycero-beta-D-manno-heptose. Its pathway is nucleotide-sugar biosynthesis; ADP-L-glycero-beta-D-manno-heptose biosynthesis; ADP-L-glycero-beta-D-manno-heptose from D-glycero-beta-D-manno-heptose 7-phosphate: step 4/4. It participates in bacterial outer membrane biogenesis; LPS core biosynthesis. Catalyzes the interconversion between ADP-D-glycero-beta-D-manno-heptose and ADP-L-glycero-beta-D-manno-heptose via an epimerization at carbon 6 of the heptose. This is ADP-L-glycero-D-manno-heptose-6-epimerase from Bordetella parapertussis (strain 12822 / ATCC BAA-587 / NCTC 13253).